Consider the following 554-residue polypeptide: MCIPRKYSSQVVDGFERAPSRAMLYPIGFKKDDFSKPQVGIASTWSMVTPCNMHINKLADKAEKGINNAGGKGVIFNTITISDGISMGSEGMKYSLVSREVIADSIETVVGCQGFDGVVAIGGCDKNMPGCIIGLARLNRPSIFVYGGTIQPGKNRTDVVSVFEAVGRFSNHEIDEIELENIEKTAVTGAGSCGGMYTANTMASAIEALGMSLPNSSAQNAISDDKNNDCIQAGEAILTLLNKDIKPRDIMTMKAFENAITVIIALGGSTNAVLHLIAMANAAEVNLKIDDFTRIGKKVPVIADLKPSGKYMMSELVEIGGTLPLMKMLLDAGLLHGDCMTVTGKTLAKNLKNVQSYADSQEIIRALDNPIKKDSHLRILRGNLAINGAVAKITGKEGSSFKGTAKCFSHEEGALKAILNDQIKAGNVIVIRYEGPVGGPGMREMLAPTSAVMGKGLGGKIALITDGRFSGGTHGFVVGHITPEAFKGGVLAVVEDGDEIIIDAQNNVLELLVDQAIIDKRLSKWTQPKPNYTKGVLAKFAKLAKSASEGAVTD.

[2Fe-2S] cluster is bound at residue cysteine 51. Aspartate 83 serves as a coordination point for Mg(2+). Cysteine 124 contributes to the [2Fe-2S] cluster binding site. Aspartate 125 and lysine 126 together coordinate Mg(2+). Position 126 is an N6-carboxylysine (lysine 126). [2Fe-2S] cluster is bound at residue cysteine 193. Residue glutamate 444 coordinates Mg(2+). Catalysis depends on serine 470, which acts as the Proton acceptor.

It belongs to the IlvD/Edd family. As to quaternary structure, homodimer. The cofactor is [2Fe-2S] cluster. Requires Mg(2+) as cofactor.

It carries out the reaction (2R)-2,3-dihydroxy-3-methylbutanoate = 3-methyl-2-oxobutanoate + H2O. The enzyme catalyses (2R,3R)-2,3-dihydroxy-3-methylpentanoate = (S)-3-methyl-2-oxopentanoate + H2O. It functions in the pathway amino-acid biosynthesis; L-isoleucine biosynthesis; L-isoleucine from 2-oxobutanoate: step 3/4. Its pathway is amino-acid biosynthesis; L-valine biosynthesis; L-valine from pyruvate: step 3/4. Functions in the biosynthesis of branched-chain amino acids. Catalyzes the dehydration of (2R,3R)-2,3-dihydroxy-3-methylpentanoate (2,3-dihydroxy-3-methylvalerate) into 2-oxo-3-methylpentanoate (2-oxo-3-methylvalerate) and of (2R)-2,3-dihydroxy-3-methylbutanoate (2,3-dihydroxyisovalerate) into 2-oxo-3-methylbutanoate (2-oxoisovalerate), the penultimate precursor to L-isoleucine and L-valine, respectively. The chain is Dihydroxy-acid dehydratase from Vesicomyosocius okutanii subsp. Calyptogena okutanii (strain HA).